The sequence spans 257 residues: Acetylglutamate kinase (257 aa).

Residues 40–41, R62, and N155 each bind substrate; that span reads GG.

Belongs to the acetylglutamate kinase family. ArgB subfamily.

The protein resides in the cytoplasm. The catalysed reaction is N-acetyl-L-glutamate + ATP = N-acetyl-L-glutamyl 5-phosphate + ADP. It functions in the pathway amino-acid biosynthesis; L-arginine biosynthesis; N(2)-acetyl-L-ornithine from L-glutamate: step 2/4. Catalyzes the ATP-dependent phosphorylation of N-acetyl-L-glutamate. The sequence is that of Acetylglutamate kinase from Shouchella clausii (strain KSM-K16) (Alkalihalobacillus clausii).